The primary structure comprises 85 residues: UPF0335 protein Oant_1161 (85 aa).

It belongs to the UPF0335 family.

The protein is UPF0335 protein Oant_1161 of Brucella anthropi (strain ATCC 49188 / DSM 6882 / CCUG 24695 / JCM 21032 / LMG 3331 / NBRC 15819 / NCTC 12168 / Alc 37) (Ochrobactrum anthropi).